Reading from the N-terminus, the 479-residue chain is Aspartyl/glutamyl-tRNA(Asn/Gln) amidotransferase subunit B (479 aa).

This sequence belongs to the GatB/GatE family. GatB subfamily. As to quaternary structure, heterotrimer of A, B and C subunits.

The catalysed reaction is L-glutamyl-tRNA(Gln) + L-glutamine + ATP + H2O = L-glutaminyl-tRNA(Gln) + L-glutamate + ADP + phosphate + H(+). It catalyses the reaction L-aspartyl-tRNA(Asn) + L-glutamine + ATP + H2O = L-asparaginyl-tRNA(Asn) + L-glutamate + ADP + phosphate + 2 H(+). Its function is as follows. Allows the formation of correctly charged Asn-tRNA(Asn) or Gln-tRNA(Gln) through the transamidation of misacylated Asp-tRNA(Asn) or Glu-tRNA(Gln) in organisms which lack either or both of asparaginyl-tRNA or glutaminyl-tRNA synthetases. The reaction takes place in the presence of glutamine and ATP through an activated phospho-Asp-tRNA(Asn) or phospho-Glu-tRNA(Gln). This is Aspartyl/glutamyl-tRNA(Asn/Gln) amidotransferase subunit B from Geobacter sp. (strain M21).